The chain runs to 542 residues: Sodium/hydrogen exchanger 8 (542 aa).

11 consecutive transmembrane segments (helical) span residues 55–75, 79–99, 118–138, 151–171, 186–206, 256–276, 306–326, 349–369, 374–394, 412–432, and 446–466; these read EQSSGMTIFFSLLVLAICIIL, LIRYRLHFLPESVAVVSLGIL, EEMFRPNMFFLLLLPPIIFES, IGSITLFAVFGTAISAFVVGG, NMTDSFAFGSLISAVDPVATI, TFLQALDYFLKMFFGSAALGT, AYLPYGLAEGISLSETCVFAF, LVLFGRAVNIFPLSYLLNFFR, TPKMMFIMWFSGLRGAIPYAL, TTIVIVLFTILLLGGSTMPLI, and NKKDVNLSKTEKMGNTVESEH. Threonine 471 is subject to Phosphothreonine. A phosphoserine mark is found at serine 532 and serine 534.

This sequence belongs to the monovalent cation:proton antiporter 1 (CPA1) transporter (TC 2.A.36) family.

Its subcellular location is the golgi apparatus membrane. It localises to the golgi apparatus. It is found in the trans-Golgi network membrane. The protein localises to the endosome. The protein resides in the multivesicular body membrane. Its subcellular location is the apical cell membrane. It localises to the cytoplasmic vesicle. It is found in the secretory vesicle. The protein localises to the acrosome. The enzyme catalyses Na(+)(in) + H(+)(out) = Na(+)(out) + H(+)(in). Na(+)/H(+) antiporter. Mediates the electoneutral exchange of intracellular H(+) ions for extracellular Na(+) in 1:1 stoichiometry. Acts as an Na(+)/H(+) exchanger in the trans-Golgi. Contributes to the regulation of pH regulation of Golgi apparatus, and consequently, in protein trafficking and endosomal morphology. In germ cells, plays a crucial role in acrosome biogenesis and sperm development, probably by playing a role in the fusion of the Golgi-derived vesicles that form the acrosomal cap. Can also be active at the cell surface of specialized cells. In the small intestine, at the cell membrane, plays a major physiological role in transepithelial absorption of Na(+) and regulates intracellular pH homeostasis of intestinal epithelial cells. Acts as an important regulator of mucosal integrity in the intestine and in the stomach, could mediate the pH fluctuation necessary for mucin exocytosis or assist membrane trafficking of other proteins. Plays a role in photoreceptor survival and in the maintenance of intracellular pH homeostasis in retinal pigment epithelium (RPE cells). The protein is Sodium/hydrogen exchanger 8 (SLC9A8) of Macaca fascicularis (Crab-eating macaque).